We begin with the raw amino-acid sequence, 423 residues long: Gamma-glutamyl phosphate reductase (423 aa).

Belongs to the gamma-glutamyl phosphate reductase family.

The protein resides in the cytoplasm. The enzyme catalyses L-glutamate 5-semialdehyde + phosphate + NADP(+) = L-glutamyl 5-phosphate + NADPH + H(+). The protein operates within amino-acid biosynthesis; L-proline biosynthesis; L-glutamate 5-semialdehyde from L-glutamate: step 2/2. Its function is as follows. Catalyzes the NADPH-dependent reduction of L-glutamate 5-phosphate into L-glutamate 5-semialdehyde and phosphate. The product spontaneously undergoes cyclization to form 1-pyrroline-5-carboxylate. The polypeptide is Gamma-glutamyl phosphate reductase (Roseiflexus castenholzii (strain DSM 13941 / HLO8)).